The primary structure comprises 327 residues: tRNA-modifying protein YgfZ (327 aa).

2 residues coordinate folate: Trp-27 and Trp-189.

This sequence belongs to the tRNA-modifying YgfZ family.

It localises to the cytoplasm. In terms of biological role, folate-binding protein involved in regulating the level of ATP-DnaA and in the modification of some tRNAs. It is probably a key factor in regulatory networks that act via tRNA modification, such as initiation of chromosomal replication. The sequence is that of tRNA-modifying protein YgfZ from Klebsiella pneumoniae (strain 342).